A 396-amino-acid chain; its full sequence is S-adenosylmethionine synthase (396 aa).

A Mg(2+)-binding site is contributed by Glu-11. His-17 is a binding site for ATP. Glu-45 lines the K(+) pocket. Residues Glu-58 and Gln-101 each contribute to the L-methionine site. Residues 169 to 171 (DGK), 237 to 240 (SGRF), Asp-248, 254 to 255 (RK), Ala-271, Lys-275, and Lys-279 each bind ATP. Asp-248 lines the L-methionine pocket. Lys-279 is an L-methionine binding site.

This sequence belongs to the AdoMet synthase family. In terms of assembly, homotetramer. It depends on Mn(2+) as a cofactor. Mg(2+) is required as a cofactor. Requires Co(2+) as cofactor. The cofactor is K(+).

It localises to the cytoplasm. The catalysed reaction is L-methionine + ATP + H2O = S-adenosyl-L-methionine + phosphate + diphosphate. Its pathway is amino-acid biosynthesis; S-adenosyl-L-methionine biosynthesis; S-adenosyl-L-methionine from L-methionine: step 1/1. In terms of biological role, catalyzes the formation of S-adenosylmethionine from methionine and ATP. The reaction comprises two steps that are both catalyzed by the same enzyme: formation of S-adenosylmethionine (AdoMet) and triphosphate, and subsequent hydrolysis of the triphosphate. In Medicago sativa subsp. falcata (Sickle medic), this protein is S-adenosylmethionine synthase (SAMS).